We begin with the raw amino-acid sequence, 324 residues long: N-acetyl-gamma-glutamyl-phosphate reductase (324 aa).

The active site involves Cys131.

Belongs to the NAGSA dehydrogenase family. Type 1 subfamily.

The protein localises to the cytoplasm. It catalyses the reaction N-acetyl-L-glutamate 5-semialdehyde + phosphate + NADP(+) = N-acetyl-L-glutamyl 5-phosphate + NADPH + H(+). It participates in amino-acid biosynthesis; L-arginine biosynthesis; N(2)-acetyl-L-ornithine from L-glutamate: step 3/4. In terms of biological role, catalyzes the NADPH-dependent reduction of N-acetyl-5-glutamyl phosphate to yield N-acetyl-L-glutamate 5-semialdehyde. The chain is N-acetyl-gamma-glutamyl-phosphate reductase from Bradyrhizobium sp. (strain BTAi1 / ATCC BAA-1182).